The primary structure comprises 111 residues: Small ribosomal subunit protein uS17 (111 aa).

The protein belongs to the universal ribosomal protein uS17 family. As to quaternary structure, part of the 30S ribosomal subunit.

In terms of biological role, one of the primary rRNA binding proteins, it binds specifically to the 5'-end of 16S ribosomal RNA. This Methanocella arvoryzae (strain DSM 22066 / NBRC 105507 / MRE50) protein is Small ribosomal subunit protein uS17.